Reading from the N-terminus, the 173-residue chain is Translation initiation factor IF-3 (173 aa).

This sequence belongs to the IF-3 family. As to quaternary structure, monomer.

Its subcellular location is the cytoplasm. In terms of biological role, IF-3 binds to the 30S ribosomal subunit and shifts the equilibrium between 70S ribosomes and their 50S and 30S subunits in favor of the free subunits, thus enhancing the availability of 30S subunits on which protein synthesis initiation begins. The protein is Translation initiation factor IF-3 of Ehrlichia ruminantium (strain Gardel).